Consider the following 249-residue polypeptide: Phosphate import ATP-binding protein PstB 1 (249 aa).

The region spanning 4-244 is the ABC transporter domain; it reads FNIENLDLFY…PKDDRTQGYV (241 aa). Residue 36-43 coordinates ATP; the sequence is GPSGCGKS.

This sequence belongs to the ABC transporter superfamily. Phosphate importer (TC 3.A.1.7) family. The complex is composed of two ATP-binding proteins (PstB), two transmembrane proteins (PstC and PstA) and a solute-binding protein (PstS).

It is found in the cell inner membrane. It carries out the reaction phosphate(out) + ATP + H2O = ADP + 2 phosphate(in) + H(+). Its function is as follows. Part of the ABC transporter complex PstSACB involved in phosphate import. Responsible for energy coupling to the transport system. In Aliivibrio fischeri (strain ATCC 700601 / ES114) (Vibrio fischeri), this protein is Phosphate import ATP-binding protein PstB 1.